The following is a 613-amino-acid chain: UBX domain-containing protein 3 (613 aa).

2 disordered regions span residues 67 to 223 (PAAA…PINP) and 453 to 472 (MNEQ…RNQQ). Residues 68-82 (AAASGRNAGASSSSR) show a composition bias toward low complexity. Positions 137-149 (THHRGAAIPRQKR) are enriched in basic residues. Low complexity predominate over residues 158-169 (SSSGSSSASFSS). Residues 452–517 (RMNEQSERRE…EEEECVRRQT (66 aa)) are a coiled coil. A UBX domain is found at 531 to 610 (PLAEIINVKF…KWPAREQIFV (80 aa)). The short motif at 582–584 (FPK) is the Interaction with cdc-48 element.

Forms a complex composed of ubxn-3, cdc-48.1, ufd-1 and npl-4.1. Forms a complex composed of ubxn-3, cdc-48.1 and/or cdc-48.2 and substrate cdt-1. Interacts (via FPK motif) with cdc-48.1 (via N-terminus) and cdc-48.2 (via N-terminus). Interacts (via N-terminus) with cdt-1 and ubiquitinated protein substrates; the interaction is cdc-48-independent. May interact with npl-4.1. As to expression, expressed in the germline (at protein level). Expressed in spermatocytes but not in mature sperm (at protein level). Expressed in the spermatheca and nerve cells.

The protein resides in the nucleus. The protein localises to the cytoplasm. It is found in the perinuclear region. It localises to the chromosome. In terms of biological role, ubiquitin-binding protein which acts as an adapter for ATPase cdc-48.1 and/or cdc-48.2, conferring substrate specificity. Together with ubxn-1 and ubxn-2, plays a role in hermaphrodite spermatogenesis probably by promoting the degradation of sex determination terminal factor tra-1. During mitosis, ensures the degradation of DNA licensing factor cdt-1 and the disassembly of the DNA replication CMG helicase complex by promoting the dissociation from chromatin of several of its components including cdc-45 and sld-5. The chain is UBX domain-containing protein 3 from Caenorhabditis elegans.